Here is a 511-residue protein sequence, read N- to C-terminus: Maturase K (511 aa).

The protein belongs to the intron maturase 2 family. MatK subfamily.

Its subcellular location is the plastid. It localises to the chloroplast. Its function is as follows. Usually encoded in the trnK tRNA gene intron. Probably assists in splicing its own and other chloroplast group II introns. This Maihuenia poeppigii (Hardy cactus) protein is Maturase K.